A 471-amino-acid chain; its full sequence is Variant surface glycoprotein ILTAT 1.21 (471 aa).

The first 21 residues, 1 to 21 (MLRALLPSTTLALILAGGGHA), serve as a signal peptide directing secretion. Residues Asn-64 and Asn-405 are each glycosylated (N-linked (GlcNAc...) asparagine). The interval 406 to 449 (ATADECPETRCEYDSEKNECRPKKGTETTATGPGERTTPADGKA) is disordered. The segment covering 412–431 (PETRCEYDSEKNECRPKKGT) has biased composition (basic and acidic residues). An N-linked (GlcNAc...) asparagine glycan is attached at Asn-450. Ser-454 carries the GPI-anchor amidated serine lipid modification. Residues 455 to 471 (DSLLIKTSPLWLAFLLF) constitute a propeptide, removed in mature form.

Its subcellular location is the cell membrane. In terms of biological role, VSG forms a coat on the surface of the parasite. The trypanosome evades the immune response of the host by expressing a series of antigenically distinct VSGs from an estimated 1000 VSG genes. The sequence is that of Variant surface glycoprotein ILTAT 1.21 from Trypanosoma brucei brucei.